A 495-amino-acid chain; its full sequence is Probable cytosol aminopeptidase (495 aa).

Positions 267 and 272 each coordinate Mn(2+). The active site involves Lys279. The Mn(2+) site is built by Asp290, Asp349, and Glu351. Arg353 is a catalytic residue.

This sequence belongs to the peptidase M17 family. Mn(2+) serves as cofactor.

The protein localises to the cytoplasm. It carries out the reaction Release of an N-terminal amino acid, Xaa-|-Yaa-, in which Xaa is preferably Leu, but may be other amino acids including Pro although not Arg or Lys, and Yaa may be Pro. Amino acid amides and methyl esters are also readily hydrolyzed, but rates on arylamides are exceedingly low.. It catalyses the reaction Release of an N-terminal amino acid, preferentially leucine, but not glutamic or aspartic acids.. Functionally, presumably involved in the processing and regular turnover of intracellular proteins. Catalyzes the removal of unsubstituted N-terminal amino acids from various peptides. The sequence is that of Probable cytosol aminopeptidase from Histophilus somni (strain 2336) (Haemophilus somnus).